We begin with the raw amino-acid sequence, 443 residues long: Probable glutamate dehydrogenase (443 aa).

Lysine 86 is an active-site residue.

The protein belongs to the Glu/Leu/Phe/Val dehydrogenases family.

The enzyme catalyses L-glutamate + NAD(+) + H2O = 2-oxoglutarate + NH4(+) + NADH + H(+). It catalyses the reaction L-glutamate + NADP(+) + H2O = 2-oxoglutarate + NH4(+) + NADPH + H(+). This is Probable glutamate dehydrogenase from Sinorhizobium fredii (strain NBRC 101917 / NGR234).